Consider the following 414-residue polypeptide: Hydroxysqualene dehydroxylase (414 aa).

Belongs to the HpnE family.

It catalyses the reaction squalene + FAD + H2O + H(+) = hydroxysqualene + FADH2. Its pathway is secondary metabolite biosynthesis; hopanoid biosynthesis. Functionally, involved in the biosynthesis of the hopanoid precursor squalene (SQ) from farnesyl diphosphate (FPP). Catalyzes the third (last) step, the reduction of hydroxysqualene (HSQ) to SQ. The polypeptide is Hydroxysqualene dehydroxylase (Zymomonas mobilis subsp. mobilis (strain ATCC 31821 / ZM4 / CP4)).